The following is a 2717-amino-acid chain: Naringenin synthase (2717 aa).

Residues 13–422 form an adenylation (A) domain region; the sequence is HHAVESRDKV…VGRKKELIIR (410 aa). Residues 531 to 617 enclose the Carrier 1 domain; sequence AAVEALVLAE…AVRDYLFNRL (87 aa). Ser-576 bears the O-(pantetheine 4'-phosphoryl)serine mark. A Ketosynthase family 3 (KS3) domain is found at 638-1066; sequence AEPIAIISMA…GTNAHIILEQ (429 aa). Residues Cys-810, His-945, and His-988 each act as for beta-ketoacyl synthase activity in the active site. In terms of domain architecture, Malonyl-CoA:ACP transacylase (MAT) spans 1204 to 1462; the sequence is PIFSRAFKEA…GPSAVLSPHV (259 aa). Positions 1549-1688 are N-terminal hotdog fold; the sequence is HGVLYRTTSI…GTLKLISLPP (140 aa). The 299-residue stretch at 1549–1847 folds into the PKS/mFAS DH domain; that stretch reads HGVLYRTTSI…LRAVQPPVVE (299 aa). A dehydratase (DH) domain region spans residues 1561–1842; that stretch reads TNDIICAGFV…ISEVMLRAVQ (282 aa). His-1581 functions as the Proton acceptor; for dehydratase activity in the catalytic mechanism. The segment at 1703-1847 is C-terminal hotdog fold; it reads NSEVDVSKAY…LRAVQPPVVE (145 aa). Catalysis depends on Asp-1764, which acts as the Proton donor; for dehydratase activity. Residues 2008–2186 enclose the Ketoreductase (KR) domain; sequence GTVLITGGTG…AVSLAWGPWA (179 aa). In terms of domain architecture, Carrier 2 spans 2277 to 2354; sequence SRSDTLLGLV…ALVQYLLDRI (78 aa). Ser-2313 carries the O-(pantetheine 4'-phosphoryl)serine modification. The segment covering 2361-2373 has biased composition (acidic residues); that stretch reads EIELDQDVAEEET. Positions 2361–2412 are disordered; sequence EIELDQDVAEEETVSGTNGHQNGHQNGTQNGHSNGHANGASTNGDATDGIDP. Residues 2375–2396 show a composition bias toward low complexity; that stretch reads SGTNGHQNGHQNGTQNGHSNGH. Residues 2497-2711 are thioester reductase (TE) domain; the sequence is SLSVYSAVAA…AIAVEIEHWA (215 aa).

In the N-terminal section; belongs to the NRP synthetase family. The cofactor is pantetheine 4'-phosphate.

PKS-NRPS hybrid synthetase that, alone, is sufficient to produce naringenin chalcone, the direct precursor of naringenin, by using p-coumaric acid (p-CA) or p-hydroxybenzoic acid (p-HBA) with the involvement of malonyl-CoA molecules. The adenylation (A) domain activates p-CA or p-HBA as adenylates, which are transferred to the thiol group of the pantetheinyl residue of the T domain, and further transferred to the adjacent PKS portion of fnsA. Besides p-CA and p-HBA, the A domain is also able to activate other substrates such as cinnamic acid and salicyclic acid. Within the PKS portion of fnsA, p-CA and p-HBA act as starter units for respectively three or four malonyl-CoA molecules for elongation by the AT and KS domains of fnsA. Afterwards, naringenin chalcone is cyclized through Claisen condensation and thereby released either spontaneously or catalyzed by the TE domain. Finally, naringenin chalcone is converted to naringenin spontaneously or by a chalcone isomerase. This Pestalotiopsis fici (strain W106-1 / CGMCC3.15140) protein is Naringenin synthase.